The chain runs to 200 residues: Imidazoleglycerol-phosphate dehydratase (200 aa).

This sequence belongs to the imidazoleglycerol-phosphate dehydratase family.

It localises to the cytoplasm. It carries out the reaction D-erythro-1-(imidazol-4-yl)glycerol 3-phosphate = 3-(imidazol-4-yl)-2-oxopropyl phosphate + H2O. It participates in amino-acid biosynthesis; L-histidine biosynthesis; L-histidine from 5-phospho-alpha-D-ribose 1-diphosphate: step 6/9. This Chlorobium limicola (strain DSM 245 / NBRC 103803 / 6330) protein is Imidazoleglycerol-phosphate dehydratase.